The chain runs to 826 residues: Lethal(3)malignant brain tumor-like protein 1 (826 aa).

S136 is modified (phosphoserine). 2 disordered regions span residues 167 to 197 and 220 to 271; these read LEPP…SGDR and LLKP…RSQL. Basic and acidic residues predominate over residues 242-256; that stretch reads EAVKQGEGKDAEREP. MBT repeat units follow at residues 280–380, 388–487, and 496–591; these read WSWE…LQLP, FSWS…LTPP, and FCWE…LEPP. The interaction with monomethylated and dimethylated peptides stretch occupies residues 453 to 460; the sequence is FDDWGDTY. The tract at residues 586-621 is disordered; that stretch reads HPLEPPLRPRESSSVSPGGCPPLSHRSPPHTKTSKY. Over residues 612–621 the composition is skewed to basic residues; it reads SPPHTKTSKY. The CCHHC-type zinc-finger motif lies at 619–662; sequence SKYNFHHRKCPTPGCDGSGHVTGKFTAHHCLSGCPLAEKNQSRL. The Zn(2+) site is built by C628, C633, H646, and C652. Residues 663–699 are disordered; sequence KAELSDSETAARKKNPSNLSPRKKPRHQGRIGRPPKY. A compositionally biased stretch (basic residues) spans 683–699; that stretch reads PRKKPRHQGRIGRPPKY. Residues 757 to 821 form the SAM domain; it reads WTIEEVFGFV…YNAILMFKNT (65 aa).

In terms of assembly, homodimer. Interacts with RB1/RB (when monomethylated at 'Lys-860'). Interacts with p53/TP53 (when monomethylated at 'Lys-382'). Interacts with CBX3, ETV6, KMT5A and VCP/p97. Ubiquitinated in a VCP/p97-dependent way following DNA damage, leading to its removal from DNA damage sites, promoting accessibility of H4K20me2 mark for DNA repair protein TP53BP1, which is then recruited to DNA damage sites. In terms of tissue distribution, highly expressed in brain, testis, eyes, and ES cells.

It localises to the nucleus. In terms of biological role, polycomb group (PcG) protein that specifically recognizes and binds mono- and dimethyllysine residues on target proteins, thereby acting as a 'reader' of a network of post-translational modifications. PcG proteins maintain the transcriptionally repressive state of genes: acts as a chromatin compaction factor by recognizing and binding mono- and dimethylated histone H1b/H1-4 at 'Lys-26' (H1bK26me1 and H1bK26me2) and histone H4 at 'Lys-20' (H4K20me1 and H4K20me2), leading to condense chromatin and repress transcription. Recognizes and binds p53/TP53 monomethylated at 'Lys-382', leading to repress p53/TP53-target genes. Also recognizes and binds RB1/RB monomethylated at 'Lys-860'. Participates in the ETV6-mediated repression. Probably plays a role in cell proliferation. Overexpression induces multinucleated cells, suggesting that it is required to accomplish normal mitosis. This is Lethal(3)malignant brain tumor-like protein 1 (L3mbtl1) from Mus musculus (Mouse).